Consider the following 773-residue polypeptide: Endoribonuclease YSH1 (773 aa).

The disordered stretch occupies residues 1–22 (MIPRRHHFKPAPQPTVQVLQPP). Zn(2+) contacts are provided by H88, H90, D92, H93, H181, and D202. Catalysis depends on H421, which acts as the Proton donor. H443 is a Zn(2+) binding site. Residues 624–637 (ASPNKHACNHSNSH) are compositionally biased toward polar residues. Disordered stretches follow at residues 624 to 656 (ASPN…AKDV) and 677 to 702 (EGPN…KDGD).

Belongs to the metallo-beta-lactamase superfamily. RNA-metabolizing metallo-beta-lactamase-like family. CPSF2/YSH1 subfamily.

Its subcellular location is the nucleus. Component of the cleavage factor I (CF I) involved in pre-mRNA 3'-end processing. In Cryptococcus neoformans var. neoformans serotype D (strain B-3501A) (Filobasidiella neoformans), this protein is Endoribonuclease YSH1 (YSH1).